The following is a 517-amino-acid chain: BTB/POZ domain-containing protein At3g49900 (517 aa).

Low complexity predominate over residues 28–37 (SSSSSSLSLS). Residues 28 to 49 (SSSSSSLSLSPKQPINLSSSPS) are disordered. Residues 38 to 49 (PKQPINLSSSPS) are compositionally biased toward polar residues. In terms of domain architecture, BTB spans 67–130 (PDVFVNVGGT…CYGAHIELTP (64 aa)). Residues 224–307 (LPAGDFNVVA…VRAMLQEQLN (84 aa)) enclose the NPH3 domain. Residues 409 to 456 (ARSASFHCVHQPSNVNKTQRGDRGSVSNLSTTYRRRRASPPQAQPQKS) form a disordered region.

The protein belongs to the NPH3 family.

It functions in the pathway protein modification; protein ubiquitination. In terms of biological role, may act as a substrate-specific adapter of an E3 ubiquitin-protein ligase complex (CUL3-RBX1-BTB) which mediates the ubiquitination and subsequent proteasomal degradation of target proteins. This Arabidopsis thaliana (Mouse-ear cress) protein is BTB/POZ domain-containing protein At3g49900.